We begin with the raw amino-acid sequence, 515 residues long: RNA exonuclease NGL2 (515 aa).

2 disordered regions span residues 1–54 (MTQD…SKPI) and 353–381 (RDGE…PVPE). Residues 21 to 34 (EINKSVKDAKHQTN) show a composition bias toward basic and acidic residues. Positions 40-52 (QHKKKGKKGKKSK) are enriched in basic residues. Residues 369-381 (KYGKDQPESPVPE) are compositionally biased toward basic and acidic residues.

Belongs to the CCR4/nocturin family.

It is found in the cytoplasm. It localises to the nucleus. Its function is as follows. Involved in pre-rRNA processing. Required for the final stage of 3'-end maturation of 5.8S rRNA at site E. This Saccharomyces cerevisiae (strain ATCC 204508 / S288c) (Baker's yeast) protein is RNA exonuclease NGL2 (NGL2).